Here is a 387-residue protein sequence, read N- to C-terminus: Ferrochelatase (387 aa).

Fe cation-binding residues include His196 and Glu277.

The protein belongs to the ferrochelatase family.

It localises to the cytoplasm. It catalyses the reaction heme b + 2 H(+) = protoporphyrin IX + Fe(2+). Its pathway is porphyrin-containing compound metabolism; protoheme biosynthesis; protoheme from protoporphyrin-IX: step 1/1. In terms of biological role, catalyzes the ferrous insertion into protoporphyrin IX. In Cyanothece sp. (strain PCC 7425 / ATCC 29141), this protein is Ferrochelatase.